We begin with the raw amino-acid sequence, 324 residues long: Fructose-1,6-bisphosphatase class 1 (324 aa).

Positions 88, 107, 109, and 110 each coordinate Mg(2+). Residues 110-113 (DGSS), Asn199, and Lys265 contribute to the substrate site. Glu271 is a binding site for Mg(2+).

The protein belongs to the FBPase class 1 family. Homotetramer. Mg(2+) serves as cofactor.

It localises to the cytoplasm. The catalysed reaction is beta-D-fructose 1,6-bisphosphate + H2O = beta-D-fructose 6-phosphate + phosphate. Its pathway is carbohydrate biosynthesis; gluconeogenesis. The sequence is that of Fructose-1,6-bisphosphatase class 1 from Neisseria meningitidis serogroup B (strain ATCC BAA-335 / MC58).